The chain runs to 348 residues: Dihydroorotase (348 aa).

Positions 17 and 19 each coordinate Zn(2+). Substrate-binding positions include 19 to 21 and N45; that span reads HLR. 3 residues coordinate Zn(2+): K103, H140, and H178. The residue at position 103 (K103) is an N6-carboxylysine. Substrate is bound at residue H140. L223 contacts substrate. D251 provides a ligand contact to Zn(2+). The active site involves D251. Substrate-binding residues include H255 and A267.

It belongs to the metallo-dependent hydrolases superfamily. DHOase family. Class II DHOase subfamily. As to quaternary structure, homodimer. Zn(2+) serves as cofactor.

It carries out the reaction (S)-dihydroorotate + H2O = N-carbamoyl-L-aspartate + H(+). The protein operates within pyrimidine metabolism; UMP biosynthesis via de novo pathway; (S)-dihydroorotate from bicarbonate: step 3/3. In terms of biological role, catalyzes the reversible cyclization of carbamoyl aspartate to dihydroorotate. The protein is Dihydroorotase of Escherichia coli O157:H7.